A 376-amino-acid chain; its full sequence is DNA replication and repair protein RecF (376 aa).

30–37 (GNNAQGKS) contacts ATP.

This sequence belongs to the RecF family.

It is found in the cytoplasm. In terms of biological role, the RecF protein is involved in DNA metabolism; it is required for DNA replication and normal SOS inducibility. RecF binds preferentially to single-stranded, linear DNA. It also seems to bind ATP. The chain is DNA replication and repair protein RecF from Trichormus variabilis (strain ATCC 29413 / PCC 7937) (Anabaena variabilis).